The sequence spans 124 residues: MNHPSELKYATTHEWVRIEGDLIVTGISDHAQDALGDLVYVEVPEVGSHMTAGTQAGVVESVKTASDIHAPVSGTVVEVNTALEDDPDFINDEPYGKGWIYKMKPDNIADVDQLLSNTDYEAGL.

Positions 22–104 (LIVTGISDHA…YGKGWIYKMK (83 aa)) constitute a Lipoyl-binding domain. The residue at position 63 (lysine 63) is an N6-lipoyllysine.

This sequence belongs to the GcvH family. In terms of assembly, the glycine cleavage system is composed of four proteins: P, T, L and H. (R)-lipoate serves as cofactor.

Its function is as follows. The glycine cleavage system catalyzes the degradation of glycine. The H protein shuttles the methylamine group of glycine from the P protein to the T protein. The protein is Glycine cleavage system H protein of Acinetobacter baylyi (strain ATCC 33305 / BD413 / ADP1).